Reading from the N-terminus, the 284-residue chain is BTB/POZ domain-containing protein 2 (284 aa).

The BTB domain maps to 37 to 108 (SDTTLIIKGE…LYCDSPRIPA (72 aa)).

As to quaternary structure, interacts with cul3.

Its subcellular location is the cytoplasm. The protein resides in the nucleus. Its pathway is protein modification; protein ubiquitination. In terms of biological role, probable substrate-specific adapter of an E3 ubiquitin-protein ligase complex which mediates the ubiquitination and subsequent proteasomal degradation of target proteins. The polypeptide is BTB/POZ domain-containing protein 2 (btb2) (Schizosaccharomyces pombe (strain 972 / ATCC 24843) (Fission yeast)).